Reading from the N-terminus, the 353-residue chain is Protein-glutamate methylesterase/protein-glutamine glutaminase 3 (353 aa).

One can recognise a Response regulatory domain in the interval 3–120 (KVLIADDSAL…SSSSDMKKVA (118 aa)). At Asp-54 the chain carries 4-aspartylphosphate. A CheB-type methylesterase domain is found at 158–353 (PRPGREVTKA…AREIIRAVNR (196 aa)). Residues Ser-173, His-200, and Asp-296 contribute to the active site.

The protein belongs to the CheB family. In terms of processing, phosphorylated by CheA. Phosphorylation of the N-terminal regulatory domain activates the methylesterase activity.

Its subcellular location is the cytoplasm. It catalyses the reaction [protein]-L-glutamate 5-O-methyl ester + H2O = L-glutamyl-[protein] + methanol + H(+). The catalysed reaction is L-glutaminyl-[protein] + H2O = L-glutamyl-[protein] + NH4(+). Functionally, involved in chemotaxis. Part of a chemotaxis signal transduction system that modulates chemotaxis in response to various stimuli. Catalyzes the demethylation of specific methylglutamate residues introduced into the chemoreceptors (methyl-accepting chemotaxis proteins or MCP) by CheR. Also mediates the irreversible deamidation of specific glutamine residues to glutamic acid. The chain is Protein-glutamate methylesterase/protein-glutamine glutaminase 3 from Syntrophomonas wolfei subsp. wolfei (strain DSM 2245B / Goettingen).